A 452-amino-acid polypeptide reads, in one-letter code: Transcription factor SMP1 (452 aa).

Positions R3–Y57 constitute an MADS-box domain. The mef2-type DNA-binding region spans S58–D87. A disordered region spans residues N97–D142. Over residues S115 to S127 the composition is skewed to low complexity.

This sequence belongs to the MEF2 family. In terms of assembly, can heterodimerize with RLM1. Interacts with HOG1. Phosphorylated by HOG1.

The protein localises to the nucleus. Functionally, transcription factor that controls part of the HOG1-mediated osmostress responses. Binds to the DNA sequence 5'-ACTACTA[TA](4)TAG-3'. Does not appear to function in the MPK1 pathway. The sequence is that of Transcription factor SMP1 (SMP1) from Saccharomyces cerevisiae (strain ATCC 204508 / S288c) (Baker's yeast).